The primary structure comprises 1157 residues: ATP-dependent helicase/deoxyribonuclease subunit B (1157 aa).

The UvrD-like helicase ATP-binding domain maps to 1-275 (MTLHAYLGRA…QYFNQLYRFN (275 aa)). 8–15 (GRAGTGKS) is a binding site for ATP. The UvrD-like helicase C-terminal domain occupies 269-583 (NQLYRFNNQD…SIGTMDLAKV (315 aa)). [4Fe-4S] cluster is bound by residues Cys784, Cys1112, Cys1115, and Cys1121.

The protein belongs to the helicase family. AddB/RexB type 1 subfamily. Heterodimer of AddA and AddB. The cofactor is Mg(2+). [4Fe-4S] cluster serves as cofactor.

In terms of biological role, the heterodimer acts as both an ATP-dependent DNA helicase and an ATP-dependent, dual-direction single-stranded exonuclease. Recognizes the chi site generating a DNA molecule suitable for the initiation of homologous recombination. The AddB subunit has 5' -&gt; 3' nuclease activity but not helicase activity. In Staphylococcus aureus (strain JH9), this protein is ATP-dependent helicase/deoxyribonuclease subunit B.